Here is a 347-residue protein sequence, read N- to C-terminus: MIKLEGVSKTYGAGPTAVHALKNIDLDVPQGAIHGVIGLSGAGKSTLIRCVNLLERPTSGRVIVDGQDLTRQDAEALRQSRHQLGMIFQHFNLLASRTVFDNVALPLELMGVSKSDIRERVEPLLDLTGLTDKARQYPAQLSGGQKQRVAIARALASRPKVLLCDEATSALDPQTTASILELLQDINRKLGLTILLITHEMEVVKSICHRVGLISDGELVEEADVGDFFTAPATRLGRDFLNAFLELEPPQALVERLEETAGPHTHPVVRLAFSGATVATPLISRLARDSGVDVSILQAKVESIQGRTLGLMIAELIGSPDTTSRALTQLEAHDINVEVLGHVQRDA.

The ABC transporter domain maps to 2 to 241; it reads IKLEGVSKTY…PATRLGRDFL (240 aa). Residue 38 to 45 participates in ATP binding; it reads GLSGAGKS.

Belongs to the ABC transporter superfamily. Methionine importer (TC 3.A.1.24) family. In terms of assembly, the complex is composed of two ATP-binding proteins (MetN), two transmembrane proteins (MetI) and a solute-binding protein (MetQ).

It is found in the cell inner membrane. It catalyses the reaction L-methionine(out) + ATP + H2O = L-methionine(in) + ADP + phosphate + H(+). It carries out the reaction D-methionine(out) + ATP + H2O = D-methionine(in) + ADP + phosphate + H(+). Its function is as follows. Part of the ABC transporter complex MetNIQ involved in methionine import. Responsible for energy coupling to the transport system. This is Methionine import ATP-binding protein MetN from Chromohalobacter salexigens (strain ATCC BAA-138 / DSM 3043 / CIP 106854 / NCIMB 13768 / 1H11).